Reading from the N-terminus, the 389-residue chain is tRNA N(3)-cytidine methyltransferase METTL2 (389 aa).

The disordered stretch occupies residues 1 to 20 (MAASFPEGVPETEDGKRPQF). The S-adenosyl-L-methionine site is built by Trp78, Tyr82, Gly181, Asp206, Asp232, Leu233, and Ile253.

Belongs to the methyltransferase superfamily. METL family. In terms of assembly, monomer. Interacts with DALRD3.

The protein resides in the cytoplasm. It carries out the reaction cytidine(32) in tRNA(Thr) + S-adenosyl-L-methionine = N(3)-methylcytidine(32) in tRNA(Thr) + S-adenosyl-L-homocysteine + H(+). The catalysed reaction is cytidine(32) in tRNA(Arg)(CCU) + S-adenosyl-L-methionine = N(3)-methylcytidine(32) in tRNA(Arg)(CCU) + S-adenosyl-L-homocysteine + H(+). S-adenosyl-L-methionine-dependent methyltransferase that mediates N(3)-methylcytidine modification of residue 32 of the tRNA anticodon loop of tRNA(Thr)(UGU) and tRNA(Arg)(CCU). N(3)-methylcytidine methylation by METTL2 requires the N6-threonylcarbamoylation of tRNA (t6A37) by the EKC/KEOPS complex as prerequisite. This Mus musculus (Mouse) protein is tRNA N(3)-cytidine methyltransferase METTL2.